Consider the following 318-residue polypeptide: Pantothenate synthetase (318 aa).

Residue 44 to 51 (MGALHQGH) participates in ATP binding. Residue His-51 is the Proton donor of the active site. Gln-75 provides a ligand contact to (R)-pantoate. Residue Gln-75 coordinates beta-alanine. 161–164 (GEKD) serves as a coordination point for ATP. Gln-167 is a (R)-pantoate binding site. Residues Val-190 and 198–201 (LSSR) contribute to the ATP site. A disordered region spans residues 295-318 (DGHPNLDSQPEPAGTDPALLPPAR).

It belongs to the pantothenate synthetase family. In terms of assembly, homodimer.

The protein resides in the cytoplasm. The catalysed reaction is (R)-pantoate + beta-alanine + ATP = (R)-pantothenate + AMP + diphosphate + H(+). The protein operates within cofactor biosynthesis; (R)-pantothenate biosynthesis; (R)-pantothenate from (R)-pantoate and beta-alanine: step 1/1. Its function is as follows. Catalyzes the condensation of pantoate with beta-alanine in an ATP-dependent reaction via a pantoyl-adenylate intermediate. The protein is Pantothenate synthetase of Nocardia farcinica (strain IFM 10152).